The primary structure comprises 106 residues: Urease subunit beta (106 aa).

The protein belongs to the urease beta subunit family. As to quaternary structure, heterotrimer of UreA (gamma), UreB (beta) and UreC (alpha) subunits. Three heterotrimers associate to form the active enzyme.

It is found in the cytoplasm. The catalysed reaction is urea + 2 H2O + H(+) = hydrogencarbonate + 2 NH4(+). The protein operates within nitrogen metabolism; urea degradation; CO(2) and NH(3) from urea (urease route): step 1/1. This is Urease subunit beta from Prochlorococcus marinus (strain AS9601).